The chain runs to 553 residues: Methionine--tRNA ligase (553 aa).

Positions 12–22 (PYANSQLHLGH) match the 'HIGH' region motif. Residues Cys-144, Cys-147, Cys-157, and Cys-160 each contribute to the Zn(2+) site. The 'KMSKS' region motif lies at 332 to 336 (KFSKS). Position 335 (Lys-335) interacts with ATP.

This sequence belongs to the class-I aminoacyl-tRNA synthetase family. MetG type 1 subfamily. In terms of assembly, monomer. Requires Zn(2+) as cofactor.

The protein resides in the cytoplasm. The catalysed reaction is tRNA(Met) + L-methionine + ATP = L-methionyl-tRNA(Met) + AMP + diphosphate. Functionally, is required not only for elongation of protein synthesis but also for the initiation of all mRNA translation through initiator tRNA(fMet) aminoacylation. This Dehalococcoides mccartyi (strain ATCC BAA-2266 / KCTC 15142 / 195) (Dehalococcoides ethenogenes (strain 195)) protein is Methionine--tRNA ligase.